A 306-amino-acid polypeptide reads, in one-letter code: Curved DNA-binding protein (306 aa).

Residues 5–69 enclose the J domain; sequence DYYAIMGVKP…QRRAEYDQMW (65 aa).

It is found in the cytoplasm. The protein localises to the nucleoid. In terms of biological role, DNA-binding protein that preferentially recognizes a curved DNA sequence. It is probably a functional analog of DnaJ; displays overlapping activities with DnaJ, but functions under different conditions, probably acting as a molecular chaperone in an adaptive response to environmental stresses other than heat shock. Lacks autonomous chaperone activity; binds native substrates and targets them for recognition by DnaK. Its activity is inhibited by the binding of CbpM. This is Curved DNA-binding protein from Shigella sonnei (strain Ss046).